The primary structure comprises 767 residues: 5-methyltetrahydropteroyltriglutamate--homocysteine methyltransferase (767 aa).

Residues 16–19 (RELK) and Lys-122 each bind 5-methyltetrahydropteroyltri-L-glutamate. L-homocysteine is bound by residues 443 to 445 (IGS) and Glu-496. L-methionine is bound by residues 443 to 445 (IGS) and Glu-496. Residues 527-528 (RC) and Trp-573 each bind 5-methyltetrahydropteroyltri-L-glutamate. Asp-611 contributes to the L-homocysteine binding site. Asp-611 serves as a coordination point for L-methionine. Glu-617 serves as a coordination point for 5-methyltetrahydropteroyltri-L-glutamate. Zn(2+) is bound by residues His-653, Cys-655, and Glu-677. The active-site Proton donor is His-706. Residue Cys-738 coordinates Zn(2+).

Belongs to the vitamin-B12 independent methionine synthase family. It depends on Zn(2+) as a cofactor.

It catalyses the reaction 5-methyltetrahydropteroyltri-L-glutamate + L-homocysteine = tetrahydropteroyltri-L-glutamate + L-methionine. It functions in the pathway amino-acid biosynthesis; L-methionine biosynthesis via de novo pathway; L-methionine from L-homocysteine (MetE route): step 1/1. Functionally, catalyzes the transfer of a methyl group from 5-methyltetrahydrofolate to homocysteine resulting in methionine formation. In Ectopseudomonas mendocina (strain ymp) (Pseudomonas mendocina), this protein is 5-methyltetrahydropteroyltriglutamate--homocysteine methyltransferase.